Consider the following 538-residue polypeptide: [Pyruvate dehydrogenase [acetyl-transferring]]-phosphatase 1, mitochondrial (538 aa).

Residues 1-71 (MPAPTQLFFP…WWQYTQGRRY (71 aa)) constitute a mitochondrion transit peptide. Residues 109–525 (VLGFDSNQLP…DDITIIVVQF (417 aa)) form the PPM-type phosphatase domain. Residues Asp-144 and Gly-145 each contribute to the Mn(2+) site. Lys-202 is subject to N6-acetyllysine. Positions 418 and 516 each coordinate Mn(2+).

This sequence belongs to the PP2C family. As to quaternary structure, heterodimer of a catalytic (PDP1) and a regulatory (PDPR) subunit. Requires Mn(2+) as cofactor. It depends on Mg(2+) as a cofactor.

It is found in the mitochondrion. The catalysed reaction is O-phospho-L-seryl-[pyruvate dehydrogenase E1 alpha subunit] + H2O = L-seryl-[pyruvate dehydrogenase E1 alpha subunit] + phosphate. Magnesium-dependent and calcium-stimulated. PDP1 activity strongly depends on its Ca(2+)-dependent binding to the lipoyl domain of E2 subunit of component of the pyruvate dehydrogenase complex. Functionally, mitochondrial enzyme that catalyzes the dephosphorylation and concomitant reactivation of the alpha subunit of the E1 component of the pyruvate dehydrogenase complex (PDC), thereby stimulating the conversion of pyruvate into acetyl-CoA. The polypeptide is [Pyruvate dehydrogenase [acetyl-transferring]]-phosphatase 1, mitochondrial (PDP1) (Bos taurus (Bovine)).